We begin with the raw amino-acid sequence, 339 residues long: MIDQKIFETTLNIDDPTNFCTNVEAHLLKELENIYVGKCFKNSFILNITGIIQRSPCFIMRTNNSGRGYMHVRFSALVSYLNAFDLIAAVKIIKNDSNIILGESLLTEPVTIVIPSSESQNNVAEVGQIVPVQLANSSVYYIPGRQQASATGSIFIPKHTFSVYHVQEELTQEQALNLTKLVNIIEMLLESRSKKDFKQICFFEKLYYTYSISSDEILDLKIWKGPKGKEMSRLKPCNVLSFLYDALKNKSSSLGFWARPPNLLKSSPLAYQQDQNSFNATELPIICSAEVMFVTLLKEIINYLQFMNDLCDTFNNEQLIKRHENIWMLIEQRKIGHDF.

It belongs to the Asfivirus DNA-directed RNA polymerase RPB7 homolog family. In terms of assembly, part of the viral DNA-directed RNA polymerase that consists of 8 polII-like subunits (RPB1, RPB2, RPB3, RPB5, RPB6, RPB7, RPB9, RPB10), a capping enzyme and a termination factor.

Its subcellular location is the host cytoplasm. The protein localises to the virion. Functionally, component of the DNA-directed RNA polymerase (RNAP) that catalyzes the transcription in the cytoplasm of viral DNA into RNA using the four ribonucleoside triphosphates as substrates. In Ornithodoros (relapsing fever ticks), this protein is DNA-directed RNA polymerase RPB7 homolog.